The sequence spans 197 residues: Putative RNA-binding protein EEED8.12 (197 aa).

An RRM domain is found at 61 to 138 (KSVFIGNVDF…RPIVVTAKRT (78 aa)). Residues 142-166 (GMGHGVRGSSRGTFGRGRGAARGAP) are disordered.

The chain is Putative RNA-binding protein EEED8.12 from Caenorhabditis elegans.